A 347-amino-acid polypeptide reads, in one-letter code: MRIEEDLKLGFKDVLIRPKRSTLKSRSDVELERQFTFKHSGQSWSGVPIIAANMDTVGTFSMASALASFDILTAVHKHYSVEEWQAFINNSSADVLKHVMVSTGTSDADFEKTKQILDLNPALNFVCIDVANGYSEHFVQFVAKAREAWPTKTICAGNVVTGEMCEELILSGADIVKVGIGPGSVCTTRVKTGVGYPQLSAVIECADAAHGLGGMIISDGGCTTPGDVAKAFGGGADFVMLGGMLAGHEESGGRIVEENGEKFMLFYGMSSESAMKRHVGGVAEYRAAEGKTVKLPLRGPVENTARDILGGLRSACTYVGASRLKELTKRTTFIRVQEQENRIFNNL.

An NADP(+)-binding site is contributed by 108-131 (ADFEKTKQILDLNPALNFVCIDVA). K(+) is bound by residues glycine 181 and glycine 183. The active-site Thioimidate intermediate is cysteine 186. 216–239 (IISDGGCTTPGDVAKAFGGGADFV) contributes to the NADP(+) binding site.

It belongs to the IMPDH/GMPR family. GuaC type 1 subfamily. In terms of assembly, homotetramer.

The enzyme catalyses IMP + NH4(+) + NADP(+) = GMP + NADPH + 2 H(+). Catalyzes the irreversible NADPH-dependent deamination of GMP to IMP. It functions in the conversion of nucleobase, nucleoside and nucleotide derivatives of G to A nucleotides, and in maintaining the intracellular balance of A and G nucleotides. The polypeptide is GMP reductase (Escherichia coli O157:H7).